The chain runs to 430 residues: Adenylosuccinate synthetase (430 aa).

GTP contacts are provided by residues 12–18 and 40–42; these read GDEGKGK and GHT. The Proton acceptor role is filled by aspartate 13. The Mg(2+) site is built by aspartate 13 and glycine 40. Residues 13-16, 38-41, threonine 129, arginine 143, glutamine 224, threonine 239, and arginine 303 contribute to the IMP site; these read DEGK and NAGH. Histidine 41 serves as the catalytic Proton donor. A substrate-binding site is contributed by 299-305; the sequence is TVSNRER. GTP-binding positions include arginine 305, 331-333, and 413-415; these read KLD and STG.

It belongs to the adenylosuccinate synthetase family. As to quaternary structure, homodimer. Mg(2+) serves as cofactor.

Its subcellular location is the cytoplasm. The enzyme catalyses IMP + L-aspartate + GTP = N(6)-(1,2-dicarboxyethyl)-AMP + GDP + phosphate + 2 H(+). It participates in purine metabolism; AMP biosynthesis via de novo pathway; AMP from IMP: step 1/2. Plays an important role in the de novo pathway of purine nucleotide biosynthesis. Catalyzes the first committed step in the biosynthesis of AMP from IMP. The sequence is that of Adenylosuccinate synthetase from Ehrlichia ruminantium (strain Welgevonden).